Consider the following 717-residue polypeptide: ATP-dependent zinc metalloprotease FtsH (717 aa).

The Cytoplasmic portion of the chain corresponds to 1-9 (MKNASRIFK). Residues 10-30 (GPLIWILLCIGLIIVFLQFAG) traverse the membrane as a helical segment. The Extracellular portion of the chain corresponds to 31–111 (SGNGYKDIPT…SWQGENPGQS (81 aa)). A helical transmembrane segment spans residues 112 to 132 (IWKALLINFLPFVIILLFFLW). Residues 133 to 717 (AMNAAQGMGG…NGNPWGPPRS (585 aa)) are Cytoplasmic-facing. 207-214 (GPPGTGKT) contacts ATP. His-429 contacts Zn(2+). Glu-430 is an active-site residue. His-433 and Asp-505 together coordinate Zn(2+). A disordered region spans residues 617–717 (AFTGSDKRVP…NGNPWGPPRS (101 aa)). The span at 691–717 (PEPPSPTHPGEGPQPPSNGNPWGPPRS) shows a compositional bias: pro residues.

This sequence in the central section; belongs to the AAA ATPase family. In the C-terminal section; belongs to the peptidase M41 family. Homohexamer. Zn(2+) serves as cofactor.

It localises to the cell membrane. Acts as a processive, ATP-dependent zinc metallopeptidase for both cytoplasmic and membrane proteins. Plays a role in the quality control of integral membrane proteins. The polypeptide is ATP-dependent zinc metalloprotease FtsH (Cutibacterium acnes (strain SK137) (Propionibacterium acnes)).